The sequence spans 183 residues: Protein Syd (183 aa).

Belongs to the Syd family.

The protein resides in the cell inner membrane. Interacts with the SecY protein in vivo. May bind preferentially to an uncomplexed state of SecY, thus functioning either as a chelating agent for excess SecY in the cell or as a regulatory factor that negatively controls the translocase function. The protein is Protein Syd of Aliivibrio fischeri (strain ATCC 700601 / ES114) (Vibrio fischeri).